Consider the following 362-residue polypeptide: GDSL esterase/lipase At5g18430 (362 aa).

The signal sequence occupies residues 1–19 (MTISTVIAFMSMFLVFVMS). Ser-35 functions as the Nucleophile in the catalytic mechanism. Asn-117 carries N-linked (GlcNAc...) asparagine glycosylation. Residues Asp-327 and His-330 contribute to the active site. N-linked (GlcNAc...) asparagine glycosylation is present at Asn-355.

Belongs to the 'GDSL' lipolytic enzyme family.

The protein resides in the secreted. The polypeptide is GDSL esterase/lipase At5g18430 (Arabidopsis thaliana (Mouse-ear cress)).